We begin with the raw amino-acid sequence, 314 residues long: Ribonucleoside-diphosphate reductase small subunit (314 aa).

Positions 73, 103, and 106 each coordinate Fe cation. The active site involves Tyr110. The chain crosses the membrane as a helical span at residues 160–180; sequence VLMILIEGIFFSSSFAAIAYL. The Fe cation site is built by Glu166, Glu200, and His203.

The protein belongs to the ribonucleoside diphosphate reductase small chain family. As to quaternary structure, heterotetramer composed of a homodimer of the large subunit (R1) and a homodimer of the small subunit (R2). Larger multisubunit protein complex are also active, composed of (R1)n(R2)n. Fe cation is required as a cofactor.

The protein resides in the host membrane. The enzyme catalyses a 2'-deoxyribonucleoside 5'-diphosphate + [thioredoxin]-disulfide + H2O = a ribonucleoside 5'-diphosphate + [thioredoxin]-dithiol. Functionally, ribonucleoside-diphosphate reductase holoenzyme provides the precursors necessary for viral DNA synthesis. Allows virus growth in non-dividing cells, as well as reactivation from latency in infected hosts. Catalyzes the biosynthesis of deoxyribonucleotides from the corresponding ribonucleotides. This chain is Ribonucleoside-diphosphate reductase small subunit, found in Bovine herpesvirus 1.1 (strain Cooper) (BoHV-1).